We begin with the raw amino-acid sequence, 200 residues long: Charged multivesicular body protein 6-A (200 aa).

Residue Gly-2 is the site of N-myristoyl glycine attachment. The stretch at 9 to 102 (RRSRVTEQDK…FAQIEMKVIE (94 aa)) forms a coiled coil. The disordered stretch occupies residues 166 to 200 (EDLELPEAPSEPLPDTIPEKQAVKNKPKPQMIAAS). The Type-2 MIT-interacting motif signature appears at 168–179 (LELPEAPSEPLP).

This sequence belongs to the SNF7 family. Probable core component of the endosomal sorting required for transport complex III (ESCRT-III). ESCRT-III components are thought to multimerize to form a flat lattice on the perimeter membrane of the endosome.

The protein resides in the endomembrane system. The protein localises to the late endosome membrane. Its function is as follows. Probable core component of the endosomal sorting required for transport complex III (ESCRT-III) which is involved in multivesicular bodies (MVBs) formation and sorting of endosomal cargo proteins into MVBs. MVBs contain intraluminal vesicles (ILVs) that are generated by invagination and scission from the limiting membrane of the endosome and mostly are delivered to lysosomes enabling degradation of membrane proteins, such as stimulated growth factor receptors, lysosomal enzymes and lipids. In the ESCRT-III complex, it probably serves as an acceptor for the ESCRT-II complex on endosomal membranes. The sequence is that of Charged multivesicular body protein 6-A (chmp6-a) from Xenopus laevis (African clawed frog).